The sequence spans 895 residues: Dystroglycan 1 (895 aa).

Positions 1 to 29 are cleaved as a signal peptide; it reads MRMSVGSAVPLPLWGRTFLLLLSVAVTQS. Positions 30 to 408 are required for laminin recognition; that stretch reads HWPSEPSEAV…SQIRPTMTIP (379 aa). Residues 49-71 form an O-glycosylated at one site region; that stretch reads SMHSALSDLHETVPTVVGIPDGT. The N-linked (GlcNAc...) asparagine glycan is linked to Asn-141. A disulfide bridge links Cys-182 with Cys-264. Residues 316-485 form a mucin-like domain region; that stretch reads ATPTPVTAIG…PATRMRTTTS (170 aa). Thr-317, Thr-319, and Thr-379 each carry an O-linked (Man6P...) threonine glycan. The disordered stretch occupies residues 381 to 500; the sequence is TLGPIQPTRV…GEPNQRPELK (120 aa). The segment covering 393–403 has biased composition (polar residues); the sequence is AGTTVPSQIRP. The segment covering 413-447 has biased composition (low complexity); sequence PSTVTTPPTTTTKKPRVSTPRPATPSTDSSTTTTR. The O-glycosylated at seven sites with GalNAc stretch occupies residues 463 to 485; sequence TTKAPITRLETASPATRMRTTTS. Residues 603–712 form the Peptidase S72 domain; it reads KAPARFKAKL…MSITVTGSGS (110 aa). Residues Asn-641, Asn-649, and Asn-661 are each glycosylated (N-linked (GlcNAc...) asparagine). Residues 654 to 749 are Extracellular-facing; the sequence is SIVVEWTNNT…DPEKSSEDDV (96 aa). Residues Cys-669 and Cys-713 are joined by a disulfide bond. The interval 724–747 is disordered; that stretch reads PMRVPSEAPATEVPDRDPEKSSED. Residues 736–747 are compositionally biased toward basic and acidic residues; that stretch reads VPDRDPEKSSED. A helical transmembrane segment spans residues 750-775; the sequence is YLHTVIPAVVVAAILLIAGIIAMICY. The Nuclear localization signal motif lies at 776–782; that stretch reads RKKRKGK. Topologically, residues 776–895 are cytoplasmic; sequence RKKRKGKLTL…YRSPPPYVPP (120 aa). Residue Thr-790 is modified to Phosphothreonine. The interval 819 to 895 is required for interaction with CAV3; that stretch reads LQEEKAPLPP…YRSPPPYVPP (77 aa). Residues 823–895 form a disordered region; sequence KAPLPPPEYP…YRSPPPYVPP (73 aa). Residues 832-846 show a composition bias toward polar residues; it reads PNQSMPETTPLNQDT. Pro residues predominate over residues 859–870; that stretch reads SAPPYQPPPPFT. A required for binding DMD and UTRN region spans residues 880 to 895; that stretch reads PKNMTPYRSPPPYVPP. The PPXY motif motif lies at 889–892; it reads PPPY. The residue at position 892 (Tyr-892) is a Phosphotyrosine; by SRC.

As to quaternary structure, monomer. Heterodimer of alpha- and beta-dystroglycan subunits which are the central components of the dystrophin-glycoprotein complex. This complex then can form a dystrophin-associated glycoprotein complex (DGC) which is composed of three subcomplexes: a cytoplasmic complex comprised of DMD (or UTRN), DTNA and a number of syntrophins, such as SNTB1, SNTB2, SNTG1 and SNTG2, the transmembrane dystroglycan complex, and the sarcoglycan-sarcospan complex. Interacts (via the N-terminal of alphaDAG1) with LARGE1; the interaction enhances laminin binding. Interacts with SGCD. Interacts with AGR2 and AGR3. Interacts (betaDAG1) with DMD; the interaction is inhibited by phosphorylation on the PPXY motif. Interacts (betaDAG1, via its PPXY motif) with UTRN (via its WWW and ZZ domains); the interaction is inhibited by phosphorylation on the PPXY motif. Interacts (betaDAG1, via its phosphorylated PPXY motif) with the SH2 domain-containing proteins, FYN, CSK, NCK and SHC. Interacts (betaDAG1) with CAV3 (via a central WW-like domain); the interaction disrupts the binding of DMD. BetaDAG1 directly interacts with ANK3, but not with ANK2; this interaction does not interfere with DMD-binding and is required for retention at costameres. Identified in a dystroglycan complex that contains at least PRX, DRP2, UTRN, DMD and DAG1. Interacts with POMGNT1. BetaDAG1 interacts with CD93. O-glycosylated. POMGNT1 catalyzes the initial addition of N-acetylglucosamine, giving rise to the GlcNAc(beta1-2)Man(alpha1-)O-Ser/Thr moiety and thus providing the necessary basis for the addition of further carbohydrate moieties. Heavily O-glycosylated comprising of up to two thirds of its mass and the carbohydrate composition differs depending on tissue type. Mucin-type O-glycosylation is important for ligand binding activity. O-mannosylation is found in high abundance in both brain and muscle where the most abundant glycan is Sia-alpha-2-3-Gal-beta-1-4-Glc-NAc-beta-1-2-Man. In muscle, glycosylation on Thr-317, Thr-319 and Thr-379 by a phosphorylated O-mannosyl glycan with the structure 2-(N-acetylamido)-2-deoxygalactosyl-beta-1,3-2-(N-acetylamido)-2-deoxyglucosyl-beta-1,4-6-phosphomannose is mediated by like-acetylglucosaminyltransferase (LARGE1) protein amd is required for laminin binding. O-glycosylated in the N-terminal region with a core 1 or possibly core 8 glycan. The brain form displays a unique glycosylation pattern which is absent in other tissues; this form shows enhanced binding to laminin LAMA5 compared to the skeletal muscle form. Post-translationally, N-glycosylated. In terms of processing, autolytic cleavage produces the alpha and beta subunits. In cutaneous cells, as well as in certain pathological conditions, shedding of beta-dystroglycan can occur releasing a peptide of about 30 kDa. SRC-mediated phosphorylation of the PPXY motif of the beta subunit recruits SH2 domain-containing proteins, but inhibits binding to WWW domain-containing proteins, DMD and UTRN. This phosphorylation also inhibits nuclear entry. In terms of tissue distribution, expressed in brain (at protein level). Expressed in the myelin sheath of peripheral nerves.

Its subcellular location is the secreted. The protein localises to the extracellular space. It localises to the cell membrane. It is found in the cytoplasm. The protein resides in the cytoskeleton. Its subcellular location is the nucleus. The protein localises to the nucleoplasm. It localises to the sarcolemma. It is found in the postsynaptic cell membrane. The dystroglycan complex is involved in a number of processes including laminin and basement membrane assembly, sarcolemmal stability, cell survival, peripheral nerve myelination, nodal structure, cell migration, and epithelial polarization. In terms of biological role, extracellular peripheral glycoprotein that acts as a receptor for extracellular matrix proteins containing laminin-G domains. Receptor for laminin-2 (LAMA2) and agrin in peripheral nerve Schwann cells. Also acts as a receptor for laminin LAMA5. Functionally, transmembrane protein that plays important roles in connecting the extracellular matrix to the cytoskeleton. Acts as a cell adhesion receptor in both muscle and non-muscle tissues. Receptor for both DMD and UTRN and, through these interactions, scaffolds axin to the cytoskeleton. Also functions in cell adhesion-mediated signaling and implicated in cell polarity. The protein is Dystroglycan 1 of Bos taurus (Bovine).